A 145-amino-acid chain; its full sequence is MDTPVYLYTDGACKGNPGAGGWGVLMRYGSREKELFGGEAQTTNNRMELTAVIEGLKSLKRRCTVIICTDSQYVKNGMENWIHGWKRNGWKTAAKQPVKNDDLWQELDALVGQHQVSWTWVKGHAGHAENERADDLANRGAAQFS.

The 142-residue stretch at 1 to 142 (MDTPVYLYTD…ADDLANRGAA (142 aa)) folds into the RNase H type-1 domain. Mg(2+)-binding residues include Asp10, Glu48, Asp70, and Asp134.

This sequence belongs to the RNase H family. In terms of assembly, monomer. The cofactor is Mg(2+).

It is found in the cytoplasm. It carries out the reaction Endonucleolytic cleavage to 5'-phosphomonoester.. Endonuclease that specifically degrades the RNA of RNA-DNA hybrids. The chain is Ribonuclease H from Neisseria gonorrhoeae (strain ATCC 700825 / FA 1090).